Consider the following 456-residue polypeptide: Methylenetetrahydrofolate--tRNA-(uracil-5-)-methyltransferase TrmFO (456 aa).

12-17 (GGGLAG) contacts FAD.

It belongs to the MnmG family. TrmFO subfamily. Requires FAD as cofactor.

It localises to the cytoplasm. It catalyses the reaction uridine(54) in tRNA + (6R)-5,10-methylene-5,6,7,8-tetrahydrofolate + NADH + H(+) = 5-methyluridine(54) in tRNA + (6S)-5,6,7,8-tetrahydrofolate + NAD(+). The enzyme catalyses uridine(54) in tRNA + (6R)-5,10-methylene-5,6,7,8-tetrahydrofolate + NADPH + H(+) = 5-methyluridine(54) in tRNA + (6S)-5,6,7,8-tetrahydrofolate + NADP(+). Functionally, catalyzes the folate-dependent formation of 5-methyl-uridine at position 54 (M-5-U54) in all tRNAs. The sequence is that of Methylenetetrahydrofolate--tRNA-(uracil-5-)-methyltransferase TrmFO from Picosynechococcus sp. (strain ATCC 27264 / PCC 7002 / PR-6) (Agmenellum quadruplicatum).